The chain runs to 264 residues: Thiazole synthase (264 aa).

The Schiff-base intermediate with DXP role is filled by Lys-106. 1-deoxy-D-xylulose 5-phosphate contacts are provided by residues Gly-167, 193-194 (AG), and 215-216 (NT).

The protein belongs to the ThiG family. As to quaternary structure, homotetramer. Forms heterodimers with either ThiH or ThiS.

The protein resides in the cytoplasm. The enzyme catalyses [ThiS sulfur-carrier protein]-C-terminal-Gly-aminoethanethioate + 2-iminoacetate + 1-deoxy-D-xylulose 5-phosphate = [ThiS sulfur-carrier protein]-C-terminal Gly-Gly + 2-[(2R,5Z)-2-carboxy-4-methylthiazol-5(2H)-ylidene]ethyl phosphate + 2 H2O + H(+). The protein operates within cofactor biosynthesis; thiamine diphosphate biosynthesis. In terms of biological role, catalyzes the rearrangement of 1-deoxy-D-xylulose 5-phosphate (DXP) to produce the thiazole phosphate moiety of thiamine. Sulfur is provided by the thiocarboxylate moiety of the carrier protein ThiS. In vitro, sulfur can be provided by H(2)S. The chain is Thiazole synthase from Xanthomonas euvesicatoria pv. vesicatoria (strain 85-10) (Xanthomonas campestris pv. vesicatoria).